Reading from the N-terminus, the 243-residue chain is tRNA1(Val) (adenine(37)-N6)-methyltransferase (243 aa).

It belongs to the methyltransferase superfamily. tRNA (adenine-N(6)-)-methyltransferase family.

It localises to the cytoplasm. The catalysed reaction is adenosine(37) in tRNA1(Val) + S-adenosyl-L-methionine = N(6)-methyladenosine(37) in tRNA1(Val) + S-adenosyl-L-homocysteine + H(+). In terms of biological role, specifically methylates the adenine in position 37 of tRNA(1)(Val) (anticodon cmo5UAC). This chain is tRNA1(Val) (adenine(37)-N6)-methyltransferase, found in Shewanella woodyi (strain ATCC 51908 / MS32).